Here is a 65-residue protein sequence, read N- to C-terminus: Large ribosomal subunit protein bL35 (65 aa).

This sequence belongs to the bacterial ribosomal protein bL35 family.

This is Large ribosomal subunit protein bL35 from Aromatoleum aromaticum (strain DSM 19018 / LMG 30748 / EbN1) (Azoarcus sp. (strain EbN1)).